Consider the following 259-residue polypeptide: Deoxyribose-phosphate aldolase (259 aa).

The Proton donor/acceptor role is filled by D101. K166 functions as the Schiff-base intermediate with acetaldehyde in the catalytic mechanism. The Proton donor/acceptor role is filled by K200.

This sequence belongs to the DeoC/FbaB aldolase family. DeoC type 2 subfamily.

The protein resides in the cytoplasm. It catalyses the reaction 2-deoxy-D-ribose 5-phosphate = D-glyceraldehyde 3-phosphate + acetaldehyde. It participates in carbohydrate degradation; 2-deoxy-D-ribose 1-phosphate degradation; D-glyceraldehyde 3-phosphate and acetaldehyde from 2-deoxy-alpha-D-ribose 1-phosphate: step 2/2. In terms of biological role, catalyzes a reversible aldol reaction between acetaldehyde and D-glyceraldehyde 3-phosphate to generate 2-deoxy-D-ribose 5-phosphate. In Glaesserella parasuis serovar 5 (strain SH0165) (Haemophilus parasuis), this protein is Deoxyribose-phosphate aldolase.